The primary structure comprises 64 residues: Large ribosomal subunit protein uL29 (64 aa).

Belongs to the universal ribosomal protein uL29 family.

The polypeptide is Large ribosomal subunit protein uL29 (Cupriavidus necator (strain ATCC 17699 / DSM 428 / KCTC 22496 / NCIMB 10442 / H16 / Stanier 337) (Ralstonia eutropha)).